A 542-amino-acid polypeptide reads, in one-letter code: Chaperonin GroEL 2 (542 aa).

Residues 30–33, Lys51, 87–91, Gly415, and Asp496 contribute to the ATP site; these read TLGP and DGTTT.

Belongs to the chaperonin (HSP60) family. In terms of assembly, forms a cylinder of 14 subunits composed of two heptameric rings stacked back-to-back. Interacts with the co-chaperonin GroES.

Its subcellular location is the cytoplasm. The catalysed reaction is ATP + H2O + a folded polypeptide = ADP + phosphate + an unfolded polypeptide.. In terms of biological role, together with its co-chaperonin GroES, plays an essential role in assisting protein folding. The GroEL-GroES system forms a nano-cage that allows encapsulation of the non-native substrate proteins and provides a physical environment optimized to promote and accelerate protein folding. The protein is Chaperonin GroEL 2 of Rhizobium etli (strain ATCC 51251 / DSM 11541 / JCM 21823 / NBRC 15573 / CFN 42).